The primary structure comprises 274 residues: Large ribosomal subunit protein uL2 (274 aa).

Residues 223-274 (VAMNPVDHPMGGGEGKASGGHPRSRTGLYAKGKKTRNTNKYSKNYILSRKKR) form a disordered region.

It belongs to the universal ribosomal protein uL2 family. Part of the 50S ribosomal subunit. Forms a bridge to the 30S subunit in the 70S ribosome.

One of the primary rRNA binding proteins. Required for association of the 30S and 50S subunits to form the 70S ribosome, for tRNA binding and peptide bond formation. It has been suggested to have peptidyltransferase activity; this is somewhat controversial. Makes several contacts with the 16S rRNA in the 70S ribosome. In Amoebophilus asiaticus (strain 5a2), this protein is Large ribosomal subunit protein uL2.